The sequence spans 126 residues: Interleukin-18-binding protein (126 aa).

A signal peptide spans 1-20 (MRILFLIAFMYGCVHPYVNA).

It belongs to the orthopoxvirus OPG022 family.

The protein resides in the secreted. Soluble IL18-binding protein that may modulate the host antiviral response. The chain is Interleukin-18-binding protein (OPG022) from Bos taurus (Bovine).